The following is a 180-amino-acid chain: MNPAPNLVMIGPMGAGKSCIGRRLAERFGLDFVDVDQAIVEQVGSSIPAIFEQHGEARFRQHEAEALHGLLAQSNKLVSTGGGAILDAGNRQRIRERGFVVYLHVSVPAQLTRLARDRNRPLLQRPDREQVLHGMAALRTPLYQEVADLTLETDHLSPAEATAQLVLRLAAQWRMSSTPA.

Residue 14–19 (GAGKSC) participates in ATP binding. A Mg(2+)-binding site is contributed by Ser18. Positions 36, 60, and 82 each coordinate substrate. Arg120 is a binding site for ATP. Arg139 contacts substrate.

Belongs to the shikimate kinase family. As to quaternary structure, monomer. It depends on Mg(2+) as a cofactor.

The protein localises to the cytoplasm. The enzyme catalyses shikimate + ATP = 3-phosphoshikimate + ADP + H(+). Its pathway is metabolic intermediate biosynthesis; chorismate biosynthesis; chorismate from D-erythrose 4-phosphate and phosphoenolpyruvate: step 5/7. Its function is as follows. Catalyzes the specific phosphorylation of the 3-hydroxyl group of shikimic acid using ATP as a cosubstrate. The sequence is that of Shikimate kinase from Xanthomonas campestris pv. campestris (strain 8004).